The chain runs to 251 residues: MNYLKTSGIVIKEVNTGEADRIITIFSKNKGKISALAKGARRPKSHLVAGTQLLCYSEFVLFKGKDMYTVNSCDVIESFYDIRNDLERLTYAAHMMDIVNDVILENQPASRLLQLFLNSLYMLSKTDRSPLQIVRVFEIRLLSTMGYAPWVSSCIKCGSTVFDSMYFSFLKCGFLCSKCLENDKGALKISEGAAKALNYIVHSKMSNLFSFEVSESVLDELGKVSQRYMKERLEKNYTKLDFIKTLDRIKC.

It belongs to the RecO family.

In terms of biological role, involved in DNA repair and RecF pathway recombination. The chain is DNA repair protein RecO from Acetivibrio thermocellus (strain ATCC 27405 / DSM 1237 / JCM 9322 / NBRC 103400 / NCIMB 10682 / NRRL B-4536 / VPI 7372) (Clostridium thermocellum).